We begin with the raw amino-acid sequence, 514 residues long: Cobyric acid synthase (514 aa).

The GATase cobBQ-type domain occupies 263–457 (ALDVAVIRLP…LHGIFDNDPL (195 aa)). Cys344 acts as the Nucleophile in catalysis. His449 is an active-site residue.

It belongs to the CobB/CobQ family. CobQ subfamily.

It participates in cofactor biosynthesis; adenosylcobalamin biosynthesis. Catalyzes amidations at positions B, D, E, and G on adenosylcobyrinic A,C-diamide. NH(2) groups are provided by glutamine, and one molecule of ATP is hydrogenolyzed for each amidation. This is Cobyric acid synthase from Desulfitobacterium hafniense (strain DSM 10664 / DCB-2).